Here is a 207-residue protein sequence, read N- to C-terminus: Microtubule-associated protein Jupiter (207 aa).

Phosphoserine is present on S30. Residues T41 and T102 each carry the phosphothreonine modification. Phosphoserine is present on residues S111, S138, and S149. Disordered regions lie at residues 129–174 (KGKY…YKAG) and 188–207 (GNQV…SGLW). Residues 136–149 (SGSVSSASSSVSSS) show a composition bias toward low complexity. The span at 150–164 (TENLKINVGNRSDGN) shows a compositional bias: polar residues.

The protein belongs to the MAP Jupiter family.

Its subcellular location is the nucleus. It is found in the cytoplasm. It localises to the cytoskeleton. The protein localises to the spindle. In terms of biological role, binds to all microtubule populations. This is Microtubule-associated protein Jupiter from Drosophila grimshawi (Hawaiian fruit fly).